We begin with the raw amino-acid sequence, 334 residues long: NADH-ubiquinone oxidoreductase chain 1 (334 aa).

9 helical membrane passes run 4-24 (FVFL…IIVI), 82-102 (FIYV…WGVI), 115-135 (IGIL…LMSG), 161-181 (IGLI…TEIV), 187-207 (GIWF…SALA), 222-242 (ELVS…FFLA), 247-267 (IILM…SPIV), 268-288 (FFKG…LLFI), and 311-331 (LPLS…LNGL).

Belongs to the complex I subunit 1 family.

Its subcellular location is the mitochondrion inner membrane. The catalysed reaction is a ubiquinone + NADH + 5 H(+)(in) = a ubiquinol + NAD(+) + 4 H(+)(out). Its function is as follows. Core subunit of the mitochondrial membrane respiratory chain NADH dehydrogenase (Complex I) that is believed to belong to the minimal assembly required for catalysis. Complex I functions in the transfer of electrons from NADH to the respiratory chain. The immediate electron acceptor for the enzyme is believed to be ubiquinone. This Metridium senile (Brown sea anemone) protein is NADH-ubiquinone oxidoreductase chain 1 (ND1).